We begin with the raw amino-acid sequence, 130 residues long: Large ribosomal subunit protein bL17 (130 aa).

Belongs to the bacterial ribosomal protein bL17 family. In terms of assembly, part of the 50S ribosomal subunit. Contacts protein L32.

The protein is Large ribosomal subunit protein bL17 of Shewanella halifaxensis (strain HAW-EB4).